Reading from the N-terminus, the 324-residue chain is Pseudouridylate synthase RPUSD4, mitochondrial (324 aa).

Residues methionine 1–glycine 11 constitute a mitochondrion transit peptide. Aspartate 105 is an active-site residue.

The protein belongs to the pseudouridine synthase RluA family.

It is found in the mitochondrion matrix. Its subcellular location is the nucleus. The protein resides in the cytoplasm. It carries out the reaction uridine in 5S rRNA = pseudouridine in 5S rRNA. It catalyses the reaction a uridine in tRNA = a pseudouridine in tRNA. The catalysed reaction is a uridine in mRNA = a pseudouridine in mRNA. Functionally, catalyzes uridine to pseudouridine isomerization (pseudouridylation) of different mitochondrial RNA substrates. Acts on position 1397 in 16S mitochondrial ribosomal RNA (16S mt-rRNA). This modification is required for the assembly of 16S mt-rRNA into a functional mitochondrial ribosome. Acts on position 39 in mitochondrial tRNA(Phe). Also catalyzes pseudouridylation of mRNAs in nucleus: acts as a regulator of pre-mRNA splicing by mediating pseudouridylation of pre-mRNAs at locations associated with alternatively spliced regions. Pseudouridylation of pre-mRNAs near splice sites directly regulates mRNA splicing and mRNA 3'-end processing. This chain is Pseudouridylate synthase RPUSD4, mitochondrial, found in Xenopus tropicalis (Western clawed frog).